The following is a 588-amino-acid chain: Putative pentatricopeptide repeat-containing protein At5g52630 (588 aa).

11 PPR repeats span residues 14 to 48 (NYNQICDLLLSSARTRSTIKGLQLHGYVVKSGLSL), 49 to 79 (IPLVANNLINFYSKSQLPFDSRRAFEDSPQK), 80 to 114 (SSTTWSSIISCFAQNELPWMSLEFLKKMMAGNLRP), 115 to 149 (DDHVLPSATKSCAILSRCDIGRSVHCLSMKTGYDA), 150 to 180 (DVFVGSSLVDMYAKCGEIVYARKMFDEMPQR), 181 to 215 (NVVTWSGMMYGYAQMGENEEALWLFKEALFENLAV), 216 to 250 (NDYSFSSVISVCANSTLLELGRQIHGLSIKSSFDS), 251 to 281 (SSFVGSSLVSLYSKCGVPEGAYQVFNEVPVK), 282 to 316 (NLGIWNAMLKAYAQHSHTQKVIELFKRMKLSGMKP), 317 to 351 (NFITFLNVLNACSHAGLVDEGRYYFDQMKESRIEP), and 352 to 386 (TDKHYASLVDMLGRAGRLQEALEVITNMPIDPTES). The segment at 387 to 462 (VWGALLTSCT…ETGLSWVEER (76 aa)) is type E motif. Positions 463–493 (NKVHTFAAGERRHEKSKEIYEKLAELGEEME) are type E(+) motif. Residues 494 to 588 (KAGYIADTSY…DGKCSCNDYW (95 aa)) form a type DYW motif region.

It belongs to the PPR family. PCMP-H subfamily.

The polypeptide is Putative pentatricopeptide repeat-containing protein At5g52630 (PCMP-H52) (Arabidopsis thaliana (Mouse-ear cress)).